The chain runs to 202 residues: LexA repressor (202 aa).

The H-T-H motif DNA-binding region spans 28–48 (RAEIAQRLGFRSPNAAEEHLK). Residues Ser119 and Lys156 each act as for autocatalytic cleavage activity in the active site.

The protein belongs to the peptidase S24 family. In terms of assembly, homodimer.

It carries out the reaction Hydrolysis of Ala-|-Gly bond in repressor LexA.. Represses a number of genes involved in the response to DNA damage (SOS response), including recA and lexA. Binds to the 16 bp palindromic sequence 5'-CTGTATATATATACAG-3'. In the presence of single-stranded DNA, RecA interacts with LexA causing an autocatalytic cleavage which disrupts the DNA-binding part of LexA, leading to derepression of the SOS regulon and eventually DNA repair. This is LexA repressor from Escherichia fergusonii (strain ATCC 35469 / DSM 13698 / CCUG 18766 / IAM 14443 / JCM 21226 / LMG 7866 / NBRC 102419 / NCTC 12128 / CDC 0568-73).